The chain runs to 112 residues: Large ribosomal subunit protein uL22 (112 aa).

The protein belongs to the universal ribosomal protein uL22 family. Part of the 50S ribosomal subunit.

Functionally, this protein binds specifically to 23S rRNA; its binding is stimulated by other ribosomal proteins, e.g. L4, L17, and L20. It is important during the early stages of 50S assembly. It makes multiple contacts with different domains of the 23S rRNA in the assembled 50S subunit and ribosome. In terms of biological role, the globular domain of the protein is located near the polypeptide exit tunnel on the outside of the subunit, while an extended beta-hairpin is found that lines the wall of the exit tunnel in the center of the 70S ribosome. The protein is Large ribosomal subunit protein uL22 of Akkermansia muciniphila (strain ATCC BAA-835 / DSM 22959 / JCM 33894 / BCRC 81048 / CCUG 64013 / CIP 107961 / Muc).